The sequence spans 68 residues: Lividin-1 (68 aa).

The first 22 residues, methionine 1–cysteine 22, serve as a signal peptide directing secretion. Residues glutamine 23 to glutamate 42 constitute a propeptide that is removed on maturation. Cysteine 62 and cysteine 68 are disulfide-bonded.

In terms of tissue distribution, expressed by the skin glands.

The protein resides in the secreted. Functionally, antimicrobial peptide. The chain is Lividin-1 from Odorrana livida (Green mountain frog).